Reading from the N-terminus, the 172-residue chain is Small ribosomal subunit protein uS5 (172 aa).

Positions 17–80 (LREKMISVNR…EQARRNMFKV (64 aa)) constitute an S5 DRBM domain.

It belongs to the universal ribosomal protein uS5 family. Part of the 30S ribosomal subunit. Contacts proteins S4 and S8.

In terms of biological role, with S4 and S12 plays an important role in translational accuracy. Its function is as follows. Located at the back of the 30S subunit body where it stabilizes the conformation of the head with respect to the body. The chain is Small ribosomal subunit protein uS5 from Burkholderia orbicola (strain AU 1054).